Reading from the N-terminus, the 157-residue chain is 2-C-methyl-D-erythritol 2,4-cyclodiphosphate synthase (157 aa).

The a divalent metal cation site is built by aspartate 8 and histidine 10. 4-CDP-2-C-methyl-D-erythritol 2-phosphate contacts are provided by residues 8–10 (DVH) and 34–35 (HS). An a divalent metal cation-binding site is contributed by histidine 42. 4-CDP-2-C-methyl-D-erythritol 2-phosphate-binding positions include 56-58 (DIG), 61-65 (FPDNE), 132-135 (TTTE), phenylalanine 139, and arginine 142.

This sequence belongs to the IspF family. In terms of assembly, homotrimer. A divalent metal cation is required as a cofactor.

It carries out the reaction 4-CDP-2-C-methyl-D-erythritol 2-phosphate = 2-C-methyl-D-erythritol 2,4-cyclic diphosphate + CMP. It participates in isoprenoid biosynthesis; isopentenyl diphosphate biosynthesis via DXP pathway; isopentenyl diphosphate from 1-deoxy-D-xylulose 5-phosphate: step 4/6. Involved in the biosynthesis of isopentenyl diphosphate (IPP) and dimethylallyl diphosphate (DMAPP), two major building blocks of isoprenoid compounds. Catalyzes the conversion of 4-diphosphocytidyl-2-C-methyl-D-erythritol 2-phosphate (CDP-ME2P) to 2-C-methyl-D-erythritol 2,4-cyclodiphosphate (ME-CPP) with a corresponding release of cytidine 5-monophosphate (CMP). The sequence is that of 2-C-methyl-D-erythritol 2,4-cyclodiphosphate synthase from Desulforamulus reducens (strain ATCC BAA-1160 / DSM 100696 / MI-1) (Desulfotomaculum reducens).